The chain runs to 314 residues: Cyclic di-GMP binding protein TDE_0214 (314 aa).

The PilZ domain occupies 146 to 234 (QKRRNERVVI…KTVRTEPVEG (89 aa)). The segment covering 288-300 (TPVSSPIGTNTAP) has biased composition (polar residues). The tract at residues 288–314 (TPVSSPIGTNTAPLTPPPADSAPEQIS) is disordered.

Functionally, cyclic-di-GMP binding protein that plays important roles in motility, chemotaxis, biofilm formation and virulence. The polypeptide is Cyclic di-GMP binding protein TDE_0214 (Treponema denticola (strain ATCC 35405 / DSM 14222 / CIP 103919 / JCM 8153 / KCTC 15104)).